The chain runs to 621 residues: SH2B adapter protein 2 (621 aa).

Tyr-47 carries the post-translational modification Phosphotyrosine. Ser-130 is subject to Phosphoserine. The interval 144–165 (RASPEPEGGATPKTTEPVSEPR) is disordered. The PH domain maps to 186 to 299 (DIQREGALRF…WVADIQGCVD (114 aa)). Ser-303 is modified (phosphoserine). In terms of domain architecture, SH2 spans 409–507 (WFHGTLSRVK…SADITLRSYV (99 aa)). Disordered stretches follow at residues 507-528 (VRAQGPPPDPGPAPNTAAPVPA) and 548-609 (PPTS…ATLG). Low complexity predominate over residues 552–570 (PSNGAGASSSSGSSSSATS). Residue Ser-597 is modified to Phosphoserine. Residue Tyr-618 is modified to Phosphotyrosine.

This sequence belongs to the SH2B adapter family. Homodimer. Interacts with KIT/c-KIT, SHC1, EPOR, PDGFR, VAV1 and VAV3. Interacts (via N-terminal region) with SHC1. Interacts (via the phosphorylated C-terminus) with GRB2. Interacts (via its SH2 domain) with EPOR, INSR and KIT. Interacts with GRB2 after B-cell antigen receptor stimulation. Interacts (via PH domain) with VAV3. Interacts with NTRK1, NTRK2 and NTRK3 (phosphorylated); after stimulation of the receptor by its extracellular ligand and subsequent autophosphorylation of the receptor. Binds INSR, GRB2, ASB6 and CAP. Insulin stimulation leads to dissociation of CAP. Binds CBS only when SH2B2/APS has become phosphorylated. INSR binding does not depend on the phosphorylation of SH2B2/APS. Phosphorylated on a tyrosine residue by NTRK1, NTRK2, NTRK3 and INSR after stimulation of the receptor by its extracellular ligand. Tyrosine phosphorylated by JAK2, KIT and other kinases activated by B-cell receptor in response to stimulation with cytokines, IL3, IL5, PDGF, IGF1, IGF2, CSF2/GM-CSF and cross-linking of the B-cell receptor complex. As to expression, detected in embryonic brain, spinal cord and cortical neurons.

It is found in the cytoplasm. It localises to the membrane. Functionally, adapter protein for several members of the tyrosine kinase receptor family. Involved in multiple signaling pathways. Binds to EPOR and suppresses EPO-induced STAT5 activation, possibly through a masking effect on STAT5 docking sites in EPOR. Suppresses PDGF-induced mitogenesis. Involved in stimulation of glucose uptake by insulin. Involved in coupling from immunoreceptor to Ras signaling. Acts as a negative regulator of cytokine signaling in collaboration with CBL. Induces cytoskeletal reorganization and neurite outgrowth in cultured neurons. This Rattus norvegicus (Rat) protein is SH2B adapter protein 2 (Sh2b2).